Reading from the N-terminus, the 259-residue chain is Tryptophan synthase alpha chain (259 aa).

Residues E35 and D46 each act as proton acceptor in the active site.

The protein belongs to the TrpA family. In terms of assembly, tetramer of two alpha and two beta chains.

It catalyses the reaction (1S,2R)-1-C-(indol-3-yl)glycerol 3-phosphate + L-serine = D-glyceraldehyde 3-phosphate + L-tryptophan + H2O. It functions in the pathway amino-acid biosynthesis; L-tryptophan biosynthesis; L-tryptophan from chorismate: step 5/5. Its function is as follows. The alpha subunit is responsible for the aldol cleavage of indoleglycerol phosphate to indole and glyceraldehyde 3-phosphate. The protein is Tryptophan synthase alpha chain of Methanococcus vannielii (strain ATCC 35089 / DSM 1224 / JCM 13029 / OCM 148 / SB).